The sequence spans 277 residues: Putative thiosulfate sulfurtransferase mpst-4 (277 aa).

Rhodanese domains follow at residues 15-153 and 155-243; these read NFGN…VVQS and SKAE…QHLN. Catalysis depends on cysteine 204, which acts as the Cysteine persulfide intermediate.

The enzyme catalyses thiosulfate + hydrogen cyanide = thiocyanate + sulfite + 2 H(+). In Caenorhabditis elegans, this protein is Putative thiosulfate sulfurtransferase mpst-4.